Reading from the N-terminus, the 467-residue chain is Mothers against decapentaplegic homolog 9 (467 aa).

An MH1 domain is found at 16–140; the sequence is PAVKRLLGWK…YRRVETPVLP (125 aa). Cys-68, Cys-113, Cys-125, and His-130 together coordinate Zn(2+). The interval 174–246 is disordered; it reads NATYPDSFQQ…SETQSGQPVD (73 aa). The segment covering 205–220 has biased composition (low complexity); the sequence is SYPHSPGSPSEPESPY. In terms of domain architecture, MH2 spans 273-467; the sequence is WCSVAYYELN…SPHNPISSVS (195 aa).

Belongs to the dwarfin/SMAD family. Interaction with the co-SMAD SMAD4. Interacts with PEBP2-alpha subunit. Interacts with RANBP3L. Post-translationally, phosphorylated on serine by BMP (bone morphogenetic proteins) type 1 receptor kinase. As to expression, expressed in heart, brain, placenta, lung, skeletal muscle, prostate, testis, ovary and small intestine. Also expressed in fetal brain, lung and kidney.

It localises to the cytoplasm. The protein resides in the nucleus. Its function is as follows. Transcriptional modulator activated by BMP (bone morphogenetic proteins) type 1 receptor kinase. SMAD9 is a receptor-regulated SMAD (R-SMAD). This Homo sapiens (Human) protein is Mothers against decapentaplegic homolog 9 (SMAD9).